The chain runs to 128 residues: Large-conductance mechanosensitive channel (128 aa).

The Cytoplasmic segment spans residues 1–16 (MNFIKEFREFAMRGNV). A helical membrane pass occupies residues 17 to 45 (VDMAVGVIIGSAFGKIVSSLVSDIFTPVL). Residues 46 to 74 (GILTGGIDFKDMKFVLAQAQGDVPAVTLN) are Periplasmic-facing. A helical membrane pass occupies residues 75–94 (YGLFIQNVIDFIIIAFAIFM). Over 95–128 (MIKVINKVRKPEEKKTAPKAETLLTEIRDLLKNK) the chain is Cytoplasmic.

The protein belongs to the MscL family. Homopentamer.

It is found in the cell inner membrane. Its function is as follows. Channel that opens in response to stretch forces in the membrane lipid bilayer. Forms a nonselective ion channel with a conductance of about 4 nanosiemens. May participate in the regulation of osmotic pressure changes within the cell. This Haemophilus influenzae (strain ATCC 51907 / DSM 11121 / KW20 / Rd) protein is Large-conductance mechanosensitive channel.